Reading from the N-terminus, the 397-residue chain is Phosphoglycerate kinase (397 aa).

Substrate-binding positions include 21–23 (DMN), Arg36, 59–62 (HLGR), Arg114, and Arg147. Residues Lys198, Glu320, and 346-349 (GGDT) each bind ATP.

This sequence belongs to the phosphoglycerate kinase family. As to quaternary structure, monomer.

The protein localises to the cytoplasm. It carries out the reaction (2R)-3-phosphoglycerate + ATP = (2R)-3-phospho-glyceroyl phosphate + ADP. Its pathway is carbohydrate degradation; glycolysis; pyruvate from D-glyceraldehyde 3-phosphate: step 2/5. The protein is Phosphoglycerate kinase of Neisseria gonorrhoeae (strain NCCP11945).